Reading from the N-terminus, the 78-residue chain is Translation initiation factor IF-1, chloroplastic (78 aa).

The S1-like domain occupies 1-73 (MASNRELIEM…TKGRIIYRLR (73 aa)).

The protein belongs to the IF-1 family. Component of the 30S ribosomal translation pre-initiation complex which assembles on the 30S ribosome in the order IF-2 and IF-3, IF-1 and N-formylmethionyl-tRNA(fMet); mRNA recruitment can occur at any time during PIC assembly.

The protein resides in the plastid. It localises to the chloroplast. One of the essential components for the initiation of protein synthesis. Stabilizes the binding of IF-2 and IF-3 on the 30S subunit to which N-formylmethionyl-tRNA(fMet) subsequently binds. Helps modulate mRNA selection, yielding the 30S pre-initiation complex (PIC). Upon addition of the 50S ribosomal subunit IF-1, IF-2 and IF-3 are released leaving the mature 70S translation initiation complex. The chain is Translation initiation factor IF-1, chloroplastic from Ostreococcus tauri.